We begin with the raw amino-acid sequence, 67 residues long: Alpha-conotoxin-like Qc1.1b (67 aa).

A signal peptide spans 1 to 21; it reads MGMRMMFTMFLLVVLAITVVS. The propeptide occupies 22–46; that stretch reads FTSDHASDGRNTAANDKASKLMALR. 2 disulfide bridges follow: Cys-49–Cys-55 and Cys-50–Cys-63. The lacks the Ser-Xaa-Pro motif that is crucial for potent interaction with nAChR stretch occupies residues 51–53; that stretch reads DNP.

It belongs to the conotoxin A superfamily. Expressed by the venom duct.

The protein resides in the secreted. In terms of biological role, alpha-conotoxins act on postsynaptic membranes, they bind to the nicotinic acetylcholine receptors (nAChR) and thus inhibit them. Has possibly a distinct nAChR binding mode from other alpha-conotoxins, due to a different three residue motif (lacks the Ser-Xaa-Pro motif). The protein is Alpha-conotoxin-like Qc1.1b of Conus quercinus (Oak cone).